Here is a 489-residue protein sequence, read N- to C-terminus: Acetylcholine receptor subunit beta (489 aa).

Residues 1 to 20 form the signal peptide; that stretch reads NSGALLWPLIWGLLLIGTQA. The Extracellular portion of the chain corresponds to 21 to 235; the sequence is LDKEAQLRDK…ITFYLVIQRK (215 aa). N-linked (GlcNAc...) asparagine glycosylation is found at N135 and N161. A disulfide bond links C148 and C162. Helical transmembrane passes span 236 to 260, 268 to 286, and 302 to 323; these read PLFY…VFYL, MTLS…LLLA, and YLIF…VLNL. Topologically, residues 324-457 are cytoplasmic; it reads HHRSPNTHHM…WQYVAMVVDR (134 aa). A helical membrane pass occupies residues 458–476; that stretch reads LFLWTFIAFTSLGTLSIFL.

It belongs to the ligand-gated ion channel (TC 1.A.9) family. Acetylcholine receptor (TC 1.A.9.1) subfamily. Beta-1/CHRNB1 sub-subfamily. Pentamer of two alpha chains, and one each of the beta, delta, and gamma (in immature muscle) or epsilon (in mature muscle) chains.

It localises to the postsynaptic cell membrane. It is found in the cell membrane. It carries out the reaction K(+)(in) = K(+)(out). It catalyses the reaction Na(+)(in) = Na(+)(out). After binding acetylcholine, the AChR responds by an extensive change in conformation that affects all subunits and leads to opening of an ion-conducting channel across the plasma membrane. In Xenopus laevis (African clawed frog), this protein is Acetylcholine receptor subunit beta (chrnb1).